Reading from the N-terminus, the 343-residue chain is Small ribosomal subunit biogenesis GTPase RsgA (343 aa).

The region spanning 116–275 (RGQLKPVAAN…LIDSPGIREF (160 aa)) is the CP-type G domain. GTP-binding positions include 163–166 (NKAD) and 217–225 (GQSGVGKSS). Positions 299, 304, 306, and 312 each coordinate Zn(2+).

This sequence belongs to the TRAFAC class YlqF/YawG GTPase family. RsgA subfamily. In terms of assembly, monomer. Associates with 30S ribosomal subunit, binds 16S rRNA. Zn(2+) serves as cofactor.

The protein resides in the cytoplasm. Functionally, one of several proteins that assist in the late maturation steps of the functional core of the 30S ribosomal subunit. Helps release RbfA from mature subunits. May play a role in the assembly of ribosomal proteins into the subunit. Circularly permuted GTPase that catalyzes slow GTP hydrolysis, GTPase activity is stimulated by the 30S ribosomal subunit. The polypeptide is Small ribosomal subunit biogenesis GTPase RsgA (Pseudomonas fluorescens (strain ATCC BAA-477 / NRRL B-23932 / Pf-5)).